The sequence spans 79 residues: Conotoxin Vi6.4 (79 aa).

The signal sequence occupies residues 1-22 (MKLTCVLIITVLFLTASQLITA). Residues 23 to 47 (DYSGDKRQYRAVRLRDEMRNFKGAR) constitute a propeptide that is removed on maturation. Intrachain disulfides connect cysteine 49/cysteine 62, cysteine 56/cysteine 67, and cysteine 61/cysteine 77. Residues proline 60 and proline 63 each carry the 4-hydroxyproline modification.

This sequence belongs to the conotoxin O1 superfamily. In terms of tissue distribution, expressed by the venom duct.

The protein resides in the secreted. Functionally, ion channel inhibitor that inhibits the increase in intracellular calcium upon depolarization in DRG neurons. In vivo, both intraperitoneal and intracranial injections into mice induce hyperactivity. The protein is Conotoxin Vi6.4 of Conus virgo (Virgin cone).